Reading from the N-terminus, the 249-residue chain is Metal-staphylopine import system ATP-binding protein CntF (249 aa).

The ABC transporter domain maps to 2-244 (IKIKDVEKSY…DNAYTRELIE (243 aa)). 42 to 49 (GESGSGKS) is a binding site for ATP.

It belongs to the ABC transporter superfamily. The complex is composed of two ATP-binding proteins (CntD and CntF), two transmembrane proteins (CntB and CntC) and a solute-binding protein (CntA).

The protein resides in the cell membrane. Its activity is regulated as follows. Nickel/cobalt import is reduced in the presence of zinc. Functionally, part of the ABC transporter complex CntABCDF (Opp1) involved in the uptake of metal in complex with the metallophore staphylopine (StP). Involved in the import of divalent metals ions such as nickel, cobalt and zinc. Probably responsible for energy coupling to the transport system. Plays a major role in nickel/cobalt import in zinc-depleted conditions. Contributes to virulence. Required for full urease activity in vitro. In Staphylococcus aureus (strain NCTC 8325 / PS 47), this protein is Metal-staphylopine import system ATP-binding protein CntF.